Reading from the N-terminus, the 367-residue chain is Pectate lyase 1 (367 aa).

The signal sequence occupies residues 1 to 21 (MASPCLIAFLVFLCAIVSCCS). Cystine bridges form between Cys28/Cys45 and Cys128/Cys147. Asn148 carries N-linked (GlcNAc...) asparagine glycosylation. Asp170 is a binding site for Ca(2+). A glycan (N-linked (GlcNAc...) asparagine) is linked at Asn178. The Ca(2+) site is built by Asp194 and Asp198. Arg250 is an active-site residue. The cysteines at positions 306 and 312 are disulfide-linked.

This sequence belongs to the polysaccharide lyase 1 family. Amb a subfamily. Requires Ca(2+) as cofactor.

The catalysed reaction is Eliminative cleavage of (1-&gt;4)-alpha-D-galacturonan to give oligosaccharides with 4-deoxy-alpha-D-galact-4-enuronosyl groups at their non-reducing ends.. It functions in the pathway glycan metabolism; pectin degradation; 2-dehydro-3-deoxy-D-gluconate from pectin: step 2/5. Functionally, has pectate lyase activity. The sequence is that of Pectate lyase 1 from Juniperus virginiana (Eastern redcedar).